We begin with the raw amino-acid sequence, 104 residues long: MDHALFTHFVGRPRHCRLEMLILDEQVSKRSWDTTVYHRRRKHLPRRRAPCGPQRPAEIPKRRKKAAVLLFWHDLCWLFRRLFFPREDSEPLMSDPARSPEEEE.

This is an uncharacterized protein from Homo sapiens (Human).